The following is a 482-amino-acid chain: Glycogen synthase (482 aa).

Lys15 is an ADP-alpha-D-glucose binding site.

It belongs to the glycosyltransferase 1 family. Bacterial/plant glycogen synthase subfamily.

It catalyses the reaction [(1-&gt;4)-alpha-D-glucosyl](n) + ADP-alpha-D-glucose = [(1-&gt;4)-alpha-D-glucosyl](n+1) + ADP + H(+). It functions in the pathway glycan biosynthesis; glycogen biosynthesis. Synthesizes alpha-1,4-glucan chains using ADP-glucose. The protein is Glycogen synthase of Elusimicrobium minutum (strain Pei191).